The primary structure comprises 224 residues: Protein GrpE (224 aa).

Residues 1–72 form a disordered region; sequence MEKERDVAQE…KAKEEQNEEL (72 aa). Positions 10-19 are enriched in polar residues; sequence EQATYEQESP. The segment covering 20-67 has biased composition (basic and acidic residues); the sequence is NAERQEELKENEHQEKNAPEEQEKVREENGRQDAQKDEIGDPEKAKEE.

The protein belongs to the GrpE family. As to quaternary structure, homodimer.

It is found in the cytoplasm. In terms of biological role, participates actively in the response to hyperosmotic and heat shock by preventing the aggregation of stress-denatured proteins, in association with DnaK and GrpE. It is the nucleotide exchange factor for DnaK and may function as a thermosensor. Unfolded proteins bind initially to DnaJ; upon interaction with the DnaJ-bound protein, DnaK hydrolyzes its bound ATP, resulting in the formation of a stable complex. GrpE releases ADP from DnaK; ATP binding to DnaK triggers the release of the substrate protein, thus completing the reaction cycle. Several rounds of ATP-dependent interactions between DnaJ, DnaK and GrpE are required for fully efficient folding. The protein is Protein GrpE of Parageobacillus thermoglucosidasius (Geobacillus thermoglucosidasius).